We begin with the raw amino-acid sequence, 160 residues long: Transcriptional repressor NrdR (160 aa).

Residues Cys-3–Cys-34 fold into a zinc finger. The 91-residue stretch at Leu-49–Val-139 folds into the ATP-cone domain.

This sequence belongs to the NrdR family. The cofactor is Zn(2+).

Negatively regulates transcription of bacterial ribonucleotide reductase nrd genes and operons by binding to NrdR-boxes. The chain is Transcriptional repressor NrdR from Enterococcus faecalis (strain ATCC 700802 / V583).